Reading from the N-terminus, the 1151-residue chain is Chromosome partition protein Smc (1151 aa).

ATP is bound at residue 32–39; the sequence is PNGCGKSN. Coiled-coil stretches lie at residues 170-218, 342-379, 407-508, and 633-994; these read ISGL…AARY, IGRL…ALGE, DSRT…REAQ, and LKQL…EGRE. Basic and acidic residues-rich tracts occupy residues 421–438 and 465–480; these read RARE…RAAE and DEAR…EARA. Disordered regions lie at residues 421-483, 806-826, and 862-889; these read RARE…AQRS, SAEL…AAEA, and LRAA…AEAR. Over residues 866 to 889 the composition is skewed to basic and acidic residues; the sequence is QEAEREAERQAGESREARARAEAR.

Belongs to the SMC family. As to quaternary structure, homodimer.

It localises to the cytoplasm. Required for chromosome condensation and partitioning. The chain is Chromosome partition protein Smc from Cereibacter sphaeroides (strain ATCC 17029 / ATH 2.4.9) (Rhodobacter sphaeroides).